Consider the following 737-residue polypeptide: Pentatricopeptide repeat-containing protein At3g49740 (737 aa).

PPR repeat units lie at residues 20–55 (TLLNLNRRLTGLTRSGENRNALKLFADVHRCTTLRP), 56–90 (DQYSVSLAITTARHLRDTIFGGQVHCYAIRSGLLC), 91–121 (HSHVSNTLLSLYERLGNLASLKKKFDEIDEP), 122–152 (DVYSWTTLLSASFKLGDIEYAFEVFDKMPER), 154–188 (DVAIWNAMITGCKESGYHETSVELFREMHKLGVRH), 189–222 (DKFGFATILSMCDYGSLDFGKQVHSLVIKAGFFI), 223–253 (ASSVVNALITMYFNCQVVVDACLVFEETDVA), 256–289 (DQVTFNVVIDGLAGFKRDESLLVFRKMLEASLRP), 290–321 (TDLTFVSVMGSCSCAAMGHQVHGLAIKTGYEK), 322–352 (YTLVSNATMTMYSSFEDFGAAHKVFESLEEK), 353–387 (DLVTWNTMISSYNQAKLGKSAMSVYKRMHIIGVKP), 388–418 (DEFTFGSLLATSLDLDVLEMVQACIIKFGLS), 420–454 (KIEISNALISAYSKNGQIEKADLLFERSLRKNLIS), 455–485 (WNAIISGFYHNGFPFEGLERFSCLLESEVRI), 488–522 (DAYTLSTLLSICVSTSSLMLGSQTHAYVLRHGQFK), 523–553 (ETLIGNALINMYSQCGTIQNSLEVFNQMSEK), 554–588 (DVVSWNSLISAYSRHGEGENAVNTYKTMQDEGKVI), 590–620 (DAATFSAVLSACSHAGLVEEGLEIFNSMVEF), and 626–656 (NVDHFSCLVDLLGRAGHLDEAESLVKISEKT). Residues 663–737 (VWWALFSACA…KQRGCSWMRL (75 aa)) form a type E motif; degenerate region.

Belongs to the PPR family. PCMP-E subfamily.

This Arabidopsis thaliana (Mouse-ear cress) protein is Pentatricopeptide repeat-containing protein At3g49740 (PCMP-E84).